A 111-amino-acid chain; its full sequence is MADWTRAQSSGAVEDILDRENKRMADSLASKVTRLKSLALDIDRDTEDQNRYLDGMDSDFTSVTGLLTGSVKRFSTMARSGRDNRKLLCGMAVVLIVAFFILSYLLSRTRT.

At 1 to 86 the chain is on the cytoplasmic side; sequence MADWTRAQSS…MARSGRDNRK (86 aa). Ser9 and Ser37 each carry phosphoserine. Positions 15–77 constitute a t-SNARE coiled-coil homology domain; it reads DILDRENKRM…TGSVKRFSTM (63 aa). A helical; Anchor for type IV membrane protein membrane pass occupies residues 87 to 107; that stretch reads LLCGMAVVLIVAFFILSYLLS. Residues 108–111 are Lumenal-facing; the sequence is RTRT.

Component of a SNARE complex consisting of STX5, YKT6, GOSR1 and BET1L. Interacts with STX5.

It localises to the golgi apparatus membrane. Its subcellular location is the golgi apparatus. It is found in the trans-Golgi network membrane. Functionally, vesicle SNARE required for targeting and fusion of retrograde transport vesicles with the Golgi complex. Required for the integrity of the Golgi complex. The polypeptide is BET1-like protein (Mus musculus (Mouse)).